Reading from the N-terminus, the 547-residue chain is CAP-Gly domain-containing linker protein 3 (547 aa).

The disordered stretch occupies residues 1–49 (MTKTDPAPMAPPPRGEEEEEEEEDEPVPEAPSPTQERRQKPVVHPSAPA). The segment covering 16 to 27 (EEEEEEEEDEPV) has biased composition (acidic residues). ANK repeat units lie at residues 117-158 (TDMT…LRSR), 160-191 (TNMN…VVNS), and 197-229 (NHGS…LRNR). The CAP-Gly 1 domain maps to 314–356 (GTTEFASGQWVGVELDEPEGKNDGSVGGVRYFICPPKQGLFAS). Residues 365–413 (DAPPSSVTSTPRTPRMDFSRVTGKGRREHKGKKKSPSSPSLGSLQQREG) are disordered. The segment covering 367 to 377 (PPSSVTSTPRT) has biased composition (low complexity). Threonine 374 is subject to Phosphothreonine. The span at 387 to 399 (GKGRREHKGKKKS) shows a compositional bias: basic residues. Phosphoserine occurs at positions 399 and 401. In terms of domain architecture, CAP-Gly 2 spans 436–478 (GKTDFAPGYWYGIELDQPTGKHDGSVFGVRYFTCAPRHGVFAP). Residues 488–547 (STDPPGDSVGAKKVHQVTMTQPKRTFTTVRTPKDIASENSISRLLFCCWFPWMLRAEMQS) form a goLD region. 2 S-palmitoyl cysteine lipidation sites follow: cysteine 534 and cysteine 535.

As to quaternary structure, homodimer. Interacts with AKT1 and AKT2; when AKT1 and AKT2 are phosphorylated and activated, affinity is higher for AKT2. Interacts with ZDHHC13 (via ANK repeats). Interacts with ZDHHC17 (via ANK repeats). Palmitoylation by ZDHHC17 regulates association with the plasma membrane.

Its subcellular location is the cell membrane. It localises to the cytoplasm. The protein resides in the golgi apparatus. The protein localises to the golgi stack. Functionally, functions as a cytoplasmic linker protein. Involved in TGN-endosome dynamics. May modulate the cellular compartmentalization of AKT kinase family and promote its cell membrane localization, thereby playing a role in glucose transport in adipocytes. The sequence is that of CAP-Gly domain-containing linker protein 3 (Clip3) from Mus musculus (Mouse).